The sequence spans 185 residues: Potassium-transporting ATPase KdpC subunit (185 aa).

Residues 14–34 (ALSLLTGVAYPLALTGIAAVI) form a helical membrane-spanning segment.

This sequence belongs to the KdpC family. In terms of assembly, the system is composed of three essential subunits: KdpA, KdpB and KdpC.

The protein localises to the cell inner membrane. In terms of biological role, part of the high-affinity ATP-driven potassium transport (or Kdp) system, which catalyzes the hydrolysis of ATP coupled with the electrogenic transport of potassium into the cytoplasm. This subunit acts as a catalytic chaperone that increases the ATP-binding affinity of the ATP-hydrolyzing subunit KdpB by the formation of a transient KdpB/KdpC/ATP ternary complex. The chain is Potassium-transporting ATPase KdpC subunit from Cereibacter sphaeroides (strain KD131 / KCTC 12085) (Rhodobacter sphaeroides).